Reading from the N-terminus, the 362-residue chain is Adenosine kinase (362 aa).

A2 carries the post-translational modification N-acetylalanine. The short motif at 8 to 16 is the Nuclear localization signal element; it reads PKPKKLKVE. Residue D35 coordinates adenosine. S49 is a Mg(2+) binding site. Residue Y77 is modified to Phosphotyrosine. D147 and N148 together coordinate Mg(2+). Q306 is a binding site for adenosine. D317 serves as the catalytic Proton acceptor.

Belongs to the carbohydrate kinase PfkB family. In terms of assembly, monomer. Mg(2+) is required as a cofactor. In terms of tissue distribution, widely expressed. Highest level in placenta, liver, muscle and kidney.

The protein localises to the nucleus. Its subcellular location is the cytoplasm. It carries out the reaction adenosine + ATP = AMP + ADP + H(+). Its pathway is purine metabolism; AMP biosynthesis via salvage pathway; AMP from adenosine: step 1/1. Activity is inhibited by 5-iodotubercidin and 5'-amino-5'-deoxyadenosine. Catalyzes the phosphorylation of the purine nucleoside adenosine at the 5' position in an ATP-dependent manner. Serves as a potential regulator of concentrations of extracellular adenosine and intracellular adenine nucleotides. The chain is Adenosine kinase from Homo sapiens (Human).